We begin with the raw amino-acid sequence, 655 residues long: Integrin beta-5 (655 aa).

The 234-residue stretch at 1–234 folds into the VWFA domain; that stretch reads DLSLSMKDDL…QLIINAYNSI (234 aa). Topologically, residues 1–575 are extracellular; sequence DLSLSMKDDL…REPECGNTPN (575 aa). Residues Ser-3 and Ser-5 each coordinate Mg(2+). Ser-5, Asp-8, Asp-9, and Asp-40 together coordinate Ca(2+). Cysteines 58 and 67 form a disulfide. Positions 98, 100, 102, and 103 each coordinate Ca(2+). Residue Glu-103 coordinates Mg(2+). Cys-115 and Cys-156 are oxidised to a cystine. N-linked (GlcNAc...) asparagine glycosylation is present at Asn-203. Gly-218 provides a ligand contact to Ca(2+). Disulfide bonds link Cys-257/Cys-269, Cys-289/Cys-317, Cys-321/Cys-340, Cys-332/Cys-343, Cys-345/Cys-354, Cys-356/Cys-386, Cys-369/Cys-384, Cys-378/Cys-389, Cys-391/Cys-404, Cys-406/Cys-427, Cys-411/Cys-425, Cys-419/Cys-430, and Cys-432/Cys-441. Asn-316 carries N-linked (GlcNAc...) asparagine glycosylation. I-EGF domains lie at 321–355, 356–405, 406–442, and 443–482; these read CSVG…TRCE, CQDG…PFCE, CDNF…DNCN, and CSTD…EMCE. Asn-408 carries an N-linked (GlcNAc...) asparagine glycan. A glycan (N-linked (GlcNAc...) asparagine) is linked at Asn-442. 9 disulfide bridges follow: Cys-443-Cys-466, Cys-450-Cys-464, Cys-458-Cys-469, Cys-471-Cys-481, Cys-484-Cys-487, Cys-491-Cys-538, Cys-497-Cys-517, Cys-500-Cys-513, and Cys-546-Cys-570. N-linked (GlcNAc...) asparagine glycosylation is found at Asn-510 and Asn-561. The helical transmembrane segment at 576–598 threads the bilayer; the sequence is AMTILLAVVGSILLVGLALLAIW. Over 599 to 655 the chain is Cytoplasmic; that stretch reads KLLVTIHDRREFAKFQSERSRARYEMASNPLYRKPISTHTVDFTFNKFNKSYNGTVD. Ser-626 carries the post-translational modification Phosphoserine.

The protein belongs to the integrin beta chain family. Heterodimer of an alpha and a beta subunit. Beta-5 (ITGB5) associates with alpha-V (ITGAV). Interacts with MYO10. Interacts with DAB2. Integrin ITGAV:ITGB5 interacts with FBLN5 (via N-terminus). ITGAV:ITGB5 interacts with CCN3. Interacts with tensin TNS3; TNS3 also interacts with PEAK1, thus acting as an adapter molecule to bridge the association of PEAK1 with ITGB5.

It is found in the cell membrane. Its function is as follows. Integrin alpha-V/beta-5 (ITGAV:ITGB5) is a receptor for fibronectin. It recognizes the sequence R-G-D in its ligand. In Papio cynocephalus (Yellow baboon), this protein is Integrin beta-5 (ITGB5).